The following is a 231-amino-acid chain: Large ribosomal subunit protein uL1 (231 aa).

The protein belongs to the universal ribosomal protein uL1 family. As to quaternary structure, part of the 50S ribosomal subunit.

Functionally, binds directly to 23S rRNA. The L1 stalk is quite mobile in the ribosome, and is involved in E site tRNA release. Protein L1 is also a translational repressor protein, it controls the translation of the L11 operon by binding to its mRNA. This Verminephrobacter eiseniae (strain EF01-2) protein is Large ribosomal subunit protein uL1.